The following is a 444-amino-acid chain: Xylose isomerase (444 aa).

Active-site residues include histidine 101 and aspartate 104. Residues glutamate 232, glutamate 268, histidine 271, aspartate 296, aspartate 307, aspartate 309, and aspartate 339 each contribute to the Mg(2+) site.

This sequence belongs to the xylose isomerase family. Homotetramer. It depends on Mg(2+) as a cofactor.

The protein resides in the cytoplasm. The enzyme catalyses alpha-D-xylose = alpha-D-xylulofuranose. The polypeptide is Xylose isomerase (Thermotoga sp. (strain RQ2)).